We begin with the raw amino-acid sequence, 415 residues long: Protein fuzzy homolog (415 aa).

Belongs to the fuzzy family. In terms of assembly, component of the CPLANE (ciliogenesis and planar polarity effectors) complex, composed of INTU, FUZ and WDPCP. Interacts with CPLANE1. Interacts with CPLANE2. Expressed in dermal and epidermal cells.

It is found in the cytoplasm. The protein localises to the cytoskeleton. Its subcellular location is the cilium basal body. Its function is as follows. Probable planar cell polarity effector involved in cilium biogenesis. May regulate protein and membrane transport to the cilium. Proposed to function as core component of the CPLANE (ciliogenesis and planar polarity effectors) complex involved in the recruitment of peripheral IFT-A proteins to basal bodies. May regulate the morphogenesis of hair follicles which depends on functional primary cilia. Binds phosphatidylinositol 3-phosphate with highest affinity, followed by phosphatidylinositol 4-phosphate and phosphatidylinositol 5-phosphate. This Mus musculus (Mouse) protein is Protein fuzzy homolog (Fuz).